Consider the following 193-residue polypeptide: Ectoine TRAP transporter small permease protein TeaB (193 aa).

The next 4 membrane-spanning stretches (helical) occupy residues 33 to 55, 65 to 82, 103 to 125, and 145 to 167; these read ILAL…RFAL, VNRI…GYAA, RALM…YYSV, and IFII…LFTA.

This sequence belongs to the TRAP transporter small permease family. In terms of assembly, the complex comprises the extracytoplasmic solute receptor protein TeaA, and the two transmembrane proteins TeaB and TeaC.

The protein resides in the cell inner membrane. Its function is as follows. Part of the tripartite ATP-independent periplasmic (TRAP) transport system TeaABC involved in the uptake of ectoine and hydroxyectoine in response to osmotic upshock. Probably functions as a recovery system for synthesized ectoine that leaks out of the cell. In Halomonas elongata (strain ATCC 33173 / DSM 2581 / NBRC 15536 / NCIMB 2198 / 1H9), this protein is Ectoine TRAP transporter small permease protein TeaB (teaB).